A 98-amino-acid chain; its full sequence is NADH-ubiquinone oxidoreductase chain 4L (98 aa).

A run of 3 helical transmembrane segments spans residues 1 to 21 (MTLI…GLLM), 29 to 49 (ALLC…LTIL), and 61 to 81 (IILL…LVMV).

It belongs to the complex I subunit 4L family. Core subunit of respiratory chain NADH dehydrogenase (Complex I) which is composed of 45 different subunits.

It localises to the mitochondrion inner membrane. It carries out the reaction a ubiquinone + NADH + 5 H(+)(in) = a ubiquinol + NAD(+) + 4 H(+)(out). Its function is as follows. Core subunit of the mitochondrial membrane respiratory chain NADH dehydrogenase (Complex I) which catalyzes electron transfer from NADH through the respiratory chain, using ubiquinone as an electron acceptor. Part of the enzyme membrane arm which is embedded in the lipid bilayer and involved in proton translocation. The polypeptide is NADH-ubiquinone oxidoreductase chain 4L (MT-ND4L) (Megaptera novaeangliae (Humpback whale)).